We begin with the raw amino-acid sequence, 292 residues long: Cyclin-dependent-like kinase 5 (292 aa).

In terms of domain architecture, Protein kinase spans Tyr-4–Phe-286. Residues Ile-10–Val-18 and Lys-33 each bind ATP. Thr-14 is subject to Phosphothreonine. Residue Tyr-15 is modified to Phosphotyrosine. A Phosphothreonine modification is found at Thr-17. The residue at position 46 (Ser-46) is a Phosphoserine. Lys-56 bears the N6-acetyllysine mark. Phosphoserine is present on Ser-72. The active-site Proton acceptor is the Asp-126. Ser-159 is subject to Phosphoserine. Tyr-239 is modified (phosphotyrosine).

It belongs to the protein kinase superfamily. CMGC Ser/Thr protein kinase family. CDC2/CDKX subfamily.

Its subcellular location is the nucleus. The protein resides in the cytoplasm. It is found in the cell membrane. The protein localises to the perikaryon. It localises to the cell projection. Its subcellular location is the growth cone. The protein resides in the lamellipodium. It is found in the postsynaptic density. The catalysed reaction is L-seryl-[protein] + ATP = O-phospho-L-seryl-[protein] + ADP + H(+). It catalyses the reaction L-threonyl-[protein] + ATP = O-phospho-L-threonyl-[protein] + ADP + H(+). Proline-directed serine/threonine-protein kinase essential for neuronal cell cycle arrest and differentiation and may be involved in apoptotic cell death in neuronal diseases by triggering abortive cell cycle re-entry. Interacts with D1 and D3-type G1 cyclins. Regulates several neuronal development and physiological processes including neuronal survival, migration and differentiation, axonal and neurite growth, synaptogenesis, oligodendrocyte differentiation, synaptic plasticity and neurotransmission, by phosphorylating key proteins. In the mature central nervous system (CNS), regulates neurotransmitter movements by phosphorylating substrates associated with neurotransmitter release and synapse plasticity; synaptic vesicle exocytosis, vesicles fusion with the presynaptic membrane, and endocytosis. May regulate endothelial cell migration and angiogenesis via the modulation of lamellipodia formation. The complex p35/CDK5 may participate in the regulation of the circadian clock. This chain is Cyclin-dependent-like kinase 5 (cdk5), found in Xenopus laevis (African clawed frog).